A 130-amino-acid chain; its full sequence is Small ribosomal subunit protein uS9 (130 aa).

The interval 111–130 (VERKKVGLRKARRRPQFSKR) is disordered. Over residues 116–130 (VGLRKARRRPQFSKR) the composition is skewed to basic residues.

The protein belongs to the universal ribosomal protein uS9 family.

The chain is Small ribosomal subunit protein uS9 from Enterobacter sp. (strain 638).